We begin with the raw amino-acid sequence, 334 residues long: Methionine import ATP-binding protein MetN (334 aa).

An ABC transporter domain is found at 7–246; sequence VEFRSVSKVF…PRSAPARAFV (240 aa). 43-50 is an ATP binding site; it reads GYSGAGKS.

Belongs to the ABC transporter superfamily. Methionine importer (TC 3.A.1.24) family. As to quaternary structure, the complex is composed of two ATP-binding proteins (MetN), two transmembrane proteins (MetI) and a solute-binding protein (MetQ).

The protein resides in the cell membrane. The catalysed reaction is L-methionine(out) + ATP + H2O = L-methionine(in) + ADP + phosphate + H(+). It catalyses the reaction D-methionine(out) + ATP + H2O = D-methionine(in) + ADP + phosphate + H(+). Its function is as follows. Part of the ABC transporter complex MetNIQ involved in methionine import. Responsible for energy coupling to the transport system. The polypeptide is Methionine import ATP-binding protein MetN (Nocardia farcinica (strain IFM 10152)).